Here is a 128-residue protein sequence, read N- to C-terminus: Large ribosomal subunit protein mL51 (128 aa).

The transit peptide at 1-31 (MAGNLLSGAGRRLWDWVPLACRSFSLGVPRL) directs the protein to the mitochondrion.

Belongs to the mitochondrion-specific ribosomal protein mL51 family. Component of the mitochondrial large ribosomal subunit (mt-LSU). Mature mammalian 55S mitochondrial ribosomes consist of a small (28S) and a large (39S) subunit. The 28S small subunit contains a 12S ribosomal RNA (12S mt-rRNA) and 30 different proteins. The 39S large subunit contains a 16S rRNA (16S mt-rRNA), a copy of mitochondrial valine transfer RNA (mt-tRNA(Val)), which plays an integral structural role, and 52 different proteins. Interacts with OXA1L.

It localises to the mitochondrion. This is Large ribosomal subunit protein mL51 (MRPL51) from Homo sapiens (Human).